The primary structure comprises 802 residues: Phenylalanine--tRNA ligase beta subunit (802 aa).

In terms of domain architecture, tRNA-binding spans serine 40 to isoleucine 155. Residues lysine 409–valine 484 enclose the B5 domain. Positions 462, 468, 471, and 472 each coordinate Mg(2+). The region spanning proline 709–arginine 802 is the FDX-ACB domain.

Belongs to the phenylalanyl-tRNA synthetase beta subunit family. Type 1 subfamily. In terms of assembly, tetramer of two alpha and two beta subunits. The cofactor is Mg(2+).

It is found in the cytoplasm. It carries out the reaction tRNA(Phe) + L-phenylalanine + ATP = L-phenylalanyl-tRNA(Phe) + AMP + diphosphate + H(+). This Listeria innocua serovar 6a (strain ATCC BAA-680 / CLIP 11262) protein is Phenylalanine--tRNA ligase beta subunit.